The sequence spans 216 residues: Probable nicotinate-nucleotide adenylyltransferase (216 aa).

It belongs to the NadD family.

It carries out the reaction nicotinate beta-D-ribonucleotide + ATP + H(+) = deamido-NAD(+) + diphosphate. Its pathway is cofactor biosynthesis; NAD(+) biosynthesis; deamido-NAD(+) from nicotinate D-ribonucleotide: step 1/1. Its function is as follows. Catalyzes the reversible adenylation of nicotinate mononucleotide (NaMN) to nicotinic acid adenine dinucleotide (NaAD). In Shewanella baltica (strain OS185), this protein is Probable nicotinate-nucleotide adenylyltransferase.